A 388-amino-acid polypeptide reads, in one-letter code: MTKQDYYTTLNISNTASQLDIKRAYKKLAIKYHPDRNQGNKTAEEKFKKIKQAYEILSDTKKRNLYDQYGHSAFEQNNNSNNEFHSSFTTSTSDFNDIFGDVFGDIFGSNKKNRKEKGSDLQYNIILTLEEAVKGIKKEIRIPKLDKCQSCYGYGSAYGSKPSTCTSCNGHGQIHMRKGFFSVQQTCSTCRGTGTMIKNPCKICFGQGRIKKSKKLSITIPAGIDTNDQIRLNNEGEAGKYGAKSGDLYIQIKVKKHPIFKRDENNLHCKIPINFVIAGGSIILYSSFRGEITVPTLEGKINLKIPSETQSGKIFRIRGKGVKSVRKGFQGDLFCKIIVETPVNLNSFQKKILYQLGESFKNYKGENNSPKSKRFFNSVKKFFNNFTK.

In terms of domain architecture, J spans 5 to 70 (DYYTTLNISN…KKRNLYDQYG (66 aa)). The CR-type zinc-finger motif lies at 135–213 (GIKKEIRIPK…CFGQGRIKKS (79 aa)). Residues C148, C151, C165, C168, C187, C190, C201, and C204 each coordinate Zn(2+). CXXCXGXG motif repeat units follow at residues 148-155 (CQSCYGYG), 165-172 (CTSCNGHG), 187-194 (CSTCRGTG), and 201-208 (CKICFGQG).

It belongs to the DnaJ family. In terms of assembly, homodimer. Zn(2+) serves as cofactor.

Its subcellular location is the cytoplasm. Functionally, participates actively in the response to hyperosmotic and heat shock by preventing the aggregation of stress-denatured proteins and by disaggregating proteins, also in an autonomous, DnaK-independent fashion. Unfolded proteins bind initially to DnaJ; upon interaction with the DnaJ-bound protein, DnaK hydrolyzes its bound ATP, resulting in the formation of a stable complex. GrpE releases ADP from DnaK; ATP binding to DnaK triggers the release of the substrate protein, thus completing the reaction cycle. Several rounds of ATP-dependent interactions between DnaJ, DnaK and GrpE are required for fully efficient folding. Also involved, together with DnaK and GrpE, in the DNA replication of plasmids through activation of initiation proteins. The protein is Chaperone protein DnaJ of Buchnera aphidicola subsp. Cinara cedri (strain Cc).